The following is a 28-amino-acid chain: Unknown protein from spot 154 of 2D-PAGE of etiolated coleoptile (28 aa).

This is Unknown protein from spot 154 of 2D-PAGE of etiolated coleoptile from Zea mays (Maize).